Reading from the N-terminus, the 1000-residue chain is Sop-2-related protein 1 (1000 aa).

Disordered stretches follow at residues 355 to 374 (KIMK…QYQQ), 379 to 422 (HQQH…GPSE), and 466 to 509 (APSE…VARG). The segment covering 390–404 (SSSSVPSTSSPSCSS) has biased composition (low complexity). Residues 406-415 (ANRKEMETVR) are compositionally biased toward basic and acidic residues. Positions 489–502 (GPSQQQQIPGTSQQ) are enriched in low complexity. The RNA-binding stretch occupies residues 633–720 (REQILPQQYM…LNTSSVQPSE (88 aa)). A disordered region spans residues 948 to 1000 (HRMHSQRPPSMGNSSTSSEASSTSPTNAATATSSPASNRPTTSTAQPPTLNPT). Over residues 960–992 (NSSTSSEASSTSPTNAATATSSPASNRPTTSTA) the composition is skewed to low complexity.

As to quaternary structure, binds through its N-terminal region to the N-terminal region of sop-2.

Its subcellular location is the nucleus. Acts synergistically with sop-2 to maintain the transcriptionally repressive state of homeotic genes throughout development. Not required to initiate repression, but to maintain it during later stages of development. Also required to repress expression of other genes. Binds RNA in a sequence-independent manner. The sequence is that of Sop-2-related protein 1 (sor-1) from Caenorhabditis elegans.